The following is a 402-amino-acid chain: 1-deoxy-D-xylulose 5-phosphate reductoisomerase (402 aa).

The NADPH site is built by Thr-21, Gly-22, Ser-23, Ile-24, Gly-47, Asn-50, and Asn-127. Residue Lys-128 coordinates 1-deoxy-D-xylulose 5-phosphate. Glu-129 is an NADPH binding site. Asp-151 contributes to the Mn(2+) binding site. Residues Ser-152, Glu-153, Ser-177, and His-200 each coordinate 1-deoxy-D-xylulose 5-phosphate. Residue Glu-153 coordinates Mn(2+). Gly-206 serves as a coordination point for NADPH. 4 residues coordinate 1-deoxy-D-xylulose 5-phosphate: Ser-213, Asn-218, Lys-219, and Glu-222. Glu-222 contacts Mn(2+).

This sequence belongs to the DXR family. It depends on Mg(2+) as a cofactor. Requires Mn(2+) as cofactor.

It carries out the reaction 2-C-methyl-D-erythritol 4-phosphate + NADP(+) = 1-deoxy-D-xylulose 5-phosphate + NADPH + H(+). Its pathway is isoprenoid biosynthesis; isopentenyl diphosphate biosynthesis via DXP pathway; isopentenyl diphosphate from 1-deoxy-D-xylulose 5-phosphate: step 1/6. Its function is as follows. Catalyzes the NADPH-dependent rearrangement and reduction of 1-deoxy-D-xylulose-5-phosphate (DXP) to 2-C-methyl-D-erythritol 4-phosphate (MEP). The polypeptide is 1-deoxy-D-xylulose 5-phosphate reductoisomerase (Mycobacterium ulcerans (strain Agy99)).